Consider the following 616-residue polypeptide: Dihydroxy-acid dehydratase (616 aa).

Residue Asp81 participates in Mg(2+) binding. Cys122 provides a ligand contact to [2Fe-2S] cluster. 2 residues coordinate Mg(2+): Asp123 and Lys124. Position 124 is an N6-carboxylysine (Lys124). Cys195 is a [2Fe-2S] cluster binding site. Glu491 contacts Mg(2+). Catalysis depends on Ser517, which acts as the Proton acceptor.

This sequence belongs to the IlvD/Edd family. As to quaternary structure, homodimer. [2Fe-2S] cluster is required as a cofactor. The cofactor is Mg(2+).

It catalyses the reaction (2R)-2,3-dihydroxy-3-methylbutanoate = 3-methyl-2-oxobutanoate + H2O. The catalysed reaction is (2R,3R)-2,3-dihydroxy-3-methylpentanoate = (S)-3-methyl-2-oxopentanoate + H2O. It participates in amino-acid biosynthesis; L-isoleucine biosynthesis; L-isoleucine from 2-oxobutanoate: step 3/4. It functions in the pathway amino-acid biosynthesis; L-valine biosynthesis; L-valine from pyruvate: step 3/4. Functionally, functions in the biosynthesis of branched-chain amino acids. Catalyzes the dehydration of (2R,3R)-2,3-dihydroxy-3-methylpentanoate (2,3-dihydroxy-3-methylvalerate) into 2-oxo-3-methylpentanoate (2-oxo-3-methylvalerate) and of (2R)-2,3-dihydroxy-3-methylbutanoate (2,3-dihydroxyisovalerate) into 2-oxo-3-methylbutanoate (2-oxoisovalerate), the penultimate precursor to L-isoleucine and L-valine, respectively. This is Dihydroxy-acid dehydratase from Shewanella sediminis (strain HAW-EB3).